Consider the following 360-residue polypeptide: NAD(P)H-quinone oxidoreductase subunit 1, chloroplastic (360 aa).

8 consecutive transmembrane segments (helical) span residues 30 to 50 (FLPIFSLVLGILTGVLVLVWL), 98 to 118 (FSIGPSIAVISILLSYSVIPF), 127 to 147 (FNIGIFLWIAISSIAPIGLLM), 165 to 185 (AAQSISYEIPLTLCLLSISLL), 203 to 223 (FWGWNLWRQPIGFIIFLISSL), 248 to 268 (YSGIKFGLFYVASYLNLLISS), 297 to 317 (IFGTTIGIFITLAKTYLFLFI), and 340 to 360 (FLLPISLGNLLLTTSFQVFSL).

Belongs to the complex I subunit 1 family. In terms of assembly, NDH is composed of at least 16 different subunits, 5 of which are encoded in the nucleus.

It localises to the plastid. It is found in the chloroplast thylakoid membrane. It carries out the reaction a plastoquinone + NADH + (n+1) H(+)(in) = a plastoquinol + NAD(+) + n H(+)(out). The enzyme catalyses a plastoquinone + NADPH + (n+1) H(+)(in) = a plastoquinol + NADP(+) + n H(+)(out). In terms of biological role, NDH shuttles electrons from NAD(P)H:plastoquinone, via FMN and iron-sulfur (Fe-S) centers, to quinones in the photosynthetic chain and possibly in a chloroplast respiratory chain. The immediate electron acceptor for the enzyme in this species is believed to be plastoquinone. Couples the redox reaction to proton translocation, and thus conserves the redox energy in a proton gradient. This is NAD(P)H-quinone oxidoreductase subunit 1, chloroplastic from Aethionema grandiflorum (Persian stone-cress).